We begin with the raw amino-acid sequence, 68 residues long: MAKVEDLRQKSDDQLAEELVQLKKEQFNLRFQAATNQLEAPARIREVRRSIAQIKTLQNERAASAAKA.

This sequence belongs to the universal ribosomal protein uL29 family.

This Erythrobacter litoralis (strain HTCC2594) protein is Large ribosomal subunit protein uL29.